We begin with the raw amino-acid sequence, 231 residues long: 7-cyano-7-deazaguanine synthase (231 aa).

An ATP-binding site is contributed by Phe17–Leu27. Residues Cys193, Cys201, Cys204, and Cys207 each contribute to the Zn(2+) site.

Belongs to the QueC family. The cofactor is Zn(2+).

The catalysed reaction is 7-carboxy-7-deazaguanine + NH4(+) + ATP = 7-cyano-7-deazaguanine + ADP + phosphate + H2O + H(+). It functions in the pathway purine metabolism; 7-cyano-7-deazaguanine biosynthesis. Catalyzes the ATP-dependent conversion of 7-carboxy-7-deazaguanine (CDG) to 7-cyano-7-deazaguanine (preQ(0)). The protein is 7-cyano-7-deazaguanine synthase of Hahella chejuensis (strain KCTC 2396).